The following is a 712-amino-acid chain: Ribosomal RNA large subunit methyltransferase K/L (712 aa).

The 112-residue stretch at 46-157 (GAYQALLHSR…REKLIVSLDL (112 aa)) folds into the THUMP domain.

Belongs to the methyltransferase superfamily. RlmKL family.

The protein resides in the cytoplasm. It catalyses the reaction guanosine(2445) in 23S rRNA + S-adenosyl-L-methionine = N(2)-methylguanosine(2445) in 23S rRNA + S-adenosyl-L-homocysteine + H(+). The catalysed reaction is guanosine(2069) in 23S rRNA + S-adenosyl-L-methionine = N(2)-methylguanosine(2069) in 23S rRNA + S-adenosyl-L-homocysteine + H(+). In terms of biological role, specifically methylates the guanine in position 2445 (m2G2445) and the guanine in position 2069 (m7G2069) of 23S rRNA. The protein is Ribosomal RNA large subunit methyltransferase K/L of Haemophilus ducreyi (strain 35000HP / ATCC 700724).